Reading from the N-terminus, the 755-residue chain is MSPTACVLVLALAALRATGQGQIPLGGDLAPQMLRELQETNAALQDVRELLRHRVKEITFLKNTVMECDACGMQPARTPGLSVRPVALCAPGSCFPGVVCTETATGARCGPCPPGYTGNGSHCTDVNECNAHPCFPRVRCINTSPGFHCEACPPGFSGPTHEGVGLTFAKTNKQVCTDINECETGQHNCVPNSVCVNTRGSFQCGPCQPGFVGDQRSGCQRRGQHFCPDGSPSPCHEKADCILERDGSRSCVCAVGWAGNGLLCGRDTDLDGFPDEKLRCSERQCRKDNCVTVPNSGQEDVDRDRIGDACDPDADGDGVPNEQDNCPLVRNPDQRNSDKDKWGDACDNCRSQKNDDQKDTDRDGQGDACDDDIDGDRIRNVADNCPRVPNFDQSDSDGDGVGDACDNCPQKDNPDQRDVDHDFVGDACDSDQDQDGDGHQDSRDNCPTVPNSAQQDSDHDGKGDACDDDDDNDGVPDSRDNCRLVPNPGQEDNDRDGVGDACQGDFDADKVIDKIDVCPENAEVTLTDFRAFQTVVLDPEGDAQIDPNWVVLNQGMEIVQTMNSDPGLAVGYTAFNGVDFEGTFHVNTATDDDYAGFIFGYQDSSSFYVVMWKQMEQTYWQANPFRAVAEPGIQLKAVKSSTGPGEQLRNALWHTGDTASQVRLLWKDPRNVGWKDKTSYRWFLQHRPQVGYIRVRFYEGPELVADSNVVLDTAMRGGRLGVFCFSQENIIWANLRYRCNDTIPEDYERHRLRRA.

The signal sequence occupies residues 1-19 (MSPTACVLVLALAALRATG). A COMP N-terminal region spans residues 21–84 (GQIPLGGDLA…PARTPGLSVR (64 aa)). One can recognise an EGF-like 1 domain in the interval 85 to 124 (PVALCAPGSCFPGVVCTETATGARCGPCPPGYTGNGSHCT). 21 disulfide bridges follow: Cys89–Cys100, Cys94–Cys109, Cys112–Cys123, Cys129–Cys140, Cys134–Cys149, Cys152–Cys176, Cys182–Cys195, Cys189–Cys204, Cys207–Cys219, Cys227–Cys241, Cys235–Cys251, Cys253–Cys264, Cys280–Cys285, Cys290–Cys310, Cys326–Cys346, Cys349–Cys369, Cys385–Cys405, Cys408–Cys428, Cys446–Cys466, Cys482–Cys502, and Cys518–Cys739. Residue Asn119 is glycosylated (N-linked (GlcNAc...) asparagine). Residues 125 to 177 (DVNECNAHPCFPRVRCINTSPGFHCEACPPGFSGPTHEGVGLTFAKTNKQVCT) form the EGF-like 2; calcium-binding domain. An EGF-like 3; calcium-binding domain is found at 178-220 (DINECETGQHNCVPNSVCVNTRGSFQCGPCQPGFVGDQRSGCQ). Positions 223 to 265 (GQHFCPDGSPSPCHEKADCILERDGSRSCVCAVGWAGNGLLCG) constitute an EGF-like 4 domain. 8 TSP type-3 repeats span residues 266 to 298 (RDTD…NSGQ), 299 to 334 (EDVD…NPDQ), 335 to 357 (RNSD…NDDQ), 358 to 393 (KDTD…NFDQ), 394 to 416 (SDSD…NPDQ), 417 to 454 (RDVD…NSAQ), 455 to 490 (QDSD…NPGQ), and 491 to 526 (EDND…EVTL). Residues 295–501 (NSGQEDVDRD…DNDRDGVGDA (207 aa)) are disordered. Basic and acidic residues-rich tracts occupy residues 332-344 (PDQR…KWGD) and 350-365 (RSQK…RDGQ). Ser394 carries the phosphoserine modification. Composition is skewed to basic and acidic residues over residues 412–424 (DNPD…HDFV) and 456–465 (DSDHDGKGDA). The interval 525 to 755 (TLTDFRAFQT…DYERHRLRRA (231 aa)) is mediates cell survival and induction of the IAP family of survival proteins. In terms of domain architecture, TSP C-terminal spans 530 to 744 (RAFQTVVLDP…LRYRCNDTIP (215 aa)). N-linked (GlcNAc...) asparagine glycosylation occurs at Asn740.

This sequence belongs to the thrombospondin family. Pentamer; disulfide-linked. Exists in a more compact conformation in the presence of calcium and shows a more extended conformation in the absence of calcium. Interacts with ITGB3, ITGA5 and FN1. Binding to FN1 requires the presence of divalent cations (Ca(2+), Mg(2+) or Mn(2+)). The greatest amount of binding is seen in the presence of Mn(2+). Interacts with MATN1, MATN3, MATN4 and ACAN. Binds heparin, heparan sulfate and chondroitin sulfate. EDTA dimishes significantly its binding to ACAN and abolishes its binding to MATN3, MATN4 and chondroitin sulfate. Interacts with collagen I, II and IX, and interaction with these collagens is dependent on the presence of zinc ions. Interacts with ADAMTS12. Interacts with ITGA7. Ca(2+) serves as cofactor. In terms of processing, proteolytically cleaved by metalloproteases ADAMTS4 and ADAMTS1 with ADAMTS4 showing more potent activity.

Its subcellular location is the secreted. It is found in the extracellular space. The protein localises to the extracellular matrix. Plays a role in the structural integrity of cartilage via its interaction with other extracellular matrix proteins such as the collagens and fibronectin. Can mediate the interaction of chondrocytes with the cartilage extracellular matrix through interaction with cell surface integrin receptors. Could play a role in the pathogenesis of osteoarthritis. Potent suppressor of apoptosis in both primary chondrocytes and transformed cells. Suppresses apoptosis by blocking the activation of caspase-3 and by inducing the IAP family of survival proteins (BIRC3, BIRC2, BIRC5 and XIAP). Essential for maintaining a vascular smooth muscle cells (VSMCs) contractile/differentiated phenotype under physiological and pathological stimuli. Maintains this phenotype of VSMCs by interacting with ITGA7. This Rattus norvegicus (Rat) protein is Cartilage oligomeric matrix protein.